The sequence spans 215 residues: Large ribosomal subunit protein uL4 (215 aa).

A disordered region spans residues 43–100 (AAKRQGTHSTKTRGEVSGGGKKPYRQKGSGRARQGSTRAPQFTGGGTVHGPKPRDYSQ).

Belongs to the universal ribosomal protein uL4 family. In terms of assembly, part of the 50S ribosomal subunit.

One of the primary rRNA binding proteins, this protein initially binds near the 5'-end of the 23S rRNA. It is important during the early stages of 50S assembly. It makes multiple contacts with different domains of the 23S rRNA in the assembled 50S subunit and ribosome. In terms of biological role, forms part of the polypeptide exit tunnel. The polypeptide is Large ribosomal subunit protein uL4 (Mycolicibacterium smegmatis (Mycobacterium smegmatis)).